The primary structure comprises 406 residues: Cysteine desulfurase (406 aa).

Lys-226 bears the N6-(pyridoxal phosphate)lysine mark. Residue Cys-364 is the Cysteine persulfide intermediate of the active site.

This sequence belongs to the class-V pyridoxal-phosphate-dependent aminotransferase family. Csd subfamily. In terms of assembly, homodimer. Interacts with SufE and the SufBCD complex composed of SufB, SufC and SufD. The interaction with SufE is required to mediate the direct transfer of the sulfur atom from the S-sulfanylcysteine. It depends on pyridoxal 5'-phosphate as a cofactor.

Its subcellular location is the cytoplasm. The catalysed reaction is (sulfur carrier)-H + L-cysteine = (sulfur carrier)-SH + L-alanine. The enzyme catalyses L-selenocysteine + AH2 = hydrogenselenide + L-alanine + A + H(+). It participates in cofactor biosynthesis; iron-sulfur cluster biosynthesis. Cysteine desulfurases mobilize the sulfur from L-cysteine to yield L-alanine, an essential step in sulfur metabolism for biosynthesis of a variety of sulfur-containing biomolecules. Component of the suf operon, which is activated and required under specific conditions such as oxidative stress and iron limitation. Acts as a potent selenocysteine lyase in vitro, that mobilizes selenium from L-selenocysteine. Selenocysteine lyase activity is however unsure in vivo. In Shigella sonnei (strain Ss046), this protein is Cysteine desulfurase.